The sequence spans 397 residues: Probable sugar efflux transporter (397 aa).

12 consecutive transmembrane segments (helical) span residues 15–35 (VVTL…PVGL), 51–71 (GIML…FMLL), 81–101 (LICL…AWSF), 103–123 (VLVI…SITA), 136–156 (AQAL…GLPV), 170–190 (FLAI…LLPL), 209–229 (PALM…YTAY), 246–266 (FATV…VIFG), 273–293 (ASVL…LLMP), 301–321 (LAIL…GMQV), 333–353 (VAMS…ALVG), and 364–384 (DIGY…VIIF).

Belongs to the major facilitator superfamily. SotB (TC 2.A.1.2) family.

The protein resides in the cell inner membrane. Involved in the efflux of sugars. The physiological role may be the reduction of the intracellular concentration of toxic sugars or sugar metabolites. In Escherichia fergusonii (strain ATCC 35469 / DSM 13698 / CCUG 18766 / IAM 14443 / JCM 21226 / LMG 7866 / NBRC 102419 / NCTC 12128 / CDC 0568-73), this protein is Probable sugar efflux transporter.